The following is a 254-amino-acid chain: Uridine-cytidine kinase 1 (254 aa).

The disordered stretch occupies residues 1 to 29 (MASAGGDECEGAAPEADRPHQRPFLIGVS). 30–38 (GGTASGKST) lines the ATP pocket. Substrate is bound by residues Asp87, Tyr115, His120, Arg146, Arg155, and Gln163. Residue Asp192 coordinates ATP. Residues 224–254 (SYKRTFSEPGDHPGMLTSGKRSHLESSSRPH) are disordered. A Phosphothreonine modification is found at Thr228. Phosphoserine is present on Ser230. The segment covering 245-254 (SHLESSSRPH) has biased composition (basic and acidic residues).

Belongs to the uridine kinase family.

It carries out the reaction uridine + ATP = UMP + ADP + H(+). It catalyses the reaction cytidine + ATP = CMP + ADP + H(+). It functions in the pathway pyrimidine metabolism; CTP biosynthesis via salvage pathway; CTP from cytidine: step 1/3. It participates in pyrimidine metabolism; UMP biosynthesis via salvage pathway; UMP from uridine: step 1/1. In terms of biological role, phosphorylates uridine and cytidine to uridine monophosphate and cytidine monophosphate. Does not phosphorylate deoxyribonucleosides or purine ribonucleosides. Can use ATP or GTP as a phosphate donor. The protein is Uridine-cytidine kinase 1 (UCK1) of Macaca fascicularis (Crab-eating macaque).